Consider the following 342-residue polypeptide: uncharacterized protein (342 aa).

The protein belongs to the bacterial luciferase oxidoreductase family.

This is an uncharacterized protein from Sinorhizobium fredii (strain NBRC 101917 / NGR234).